The following is a 141-amino-acid chain: MTYAIVETGGKQLWVEPGRFYEVDRLAEVEENSPFDLSRVLLINHEGQITLGHPYVSEAVVRARVLQHRRGDKIIVYKMRPKKKTRKKRGHRQPLTRLLIESIELNGVPLATAPSRTEAAPESNPEAAPSAAATGIPADEE.

The tract at residues 111 to 141 (ATAPSRTEAAPESNPEAAPSAAATGIPADEE) is disordered. Over residues 118–133 (EAAPESNPEAAPSAAA) the composition is skewed to low complexity.

The protein belongs to the bacterial ribosomal protein bL21 family. As to quaternary structure, part of the 50S ribosomal subunit. Contacts protein L20.

In terms of biological role, this protein binds to 23S rRNA in the presence of protein L20. The chain is Large ribosomal subunit protein bL21 from Synechococcus sp. (strain JA-2-3B'a(2-13)) (Cyanobacteria bacterium Yellowstone B-Prime).